The following is a 158-amino-acid chain: Transcription elongation factor GreA (158 aa).

It belongs to the GreA/GreB family.

Its function is as follows. Necessary for efficient RNA polymerase transcription elongation past template-encoded arresting sites. The arresting sites in DNA have the property of trapping a certain fraction of elongating RNA polymerases that pass through, resulting in locked ternary complexes. Cleavage of the nascent transcript by cleavage factors such as GreA or GreB allows the resumption of elongation from the new 3'terminus. GreA releases sequences of 2 to 3 nucleotides. In Polaromonas naphthalenivorans (strain CJ2), this protein is Transcription elongation factor GreA.